Consider the following 81-residue polypeptide: MKVGVKYCGGCNPEYRREDVEDVLRKHFTIFYSEDADVLVLINGCKKACLLEEVNHPKVVSVDSPVSEEELLRRVLKAMRG.

This is an uncharacterized protein from Archaeoglobus fulgidus (strain ATCC 49558 / DSM 4304 / JCM 9628 / NBRC 100126 / VC-16).